Consider the following 358-residue polypeptide: Neutral protease 2 homolog PABG_02362 (358 aa).

The N-terminal stretch at 1 to 19 (MRRVSGILAVAAFTISAFA) is a signal peptide. Residues 20 to 182 (GVIQPVAKDA…FAAMNQFVKI (163 aa)) constitute a propeptide that is removed on maturation. Disulfide bonds link Cys-188/Cys-259 and Cys-266/Cys-284. Asn-249 carries an N-linked (GlcNAc...) asparagine glycan. His-309 provides a ligand contact to Zn(2+). Residue Glu-310 is part of the active site. Residues His-313 and Asp-324 each coordinate Zn(2+).

It belongs to the peptidase M35 family. Zn(2+) serves as cofactor.

It localises to the secreted. It carries out the reaction Preferential cleavage of bonds with hydrophobic residues in P1'. Also 3-Asn-|-Gln-4 and 8-Gly-|-Ser-9 bonds in insulin B chain.. Secreted metalloproteinase that allows assimilation of proteinaceous substrates. Shows high activities on basic nuclear substrates such as histone and protamine. This Paracoccidioides brasiliensis (strain Pb03) protein is Neutral protease 2 homolog PABG_02362.